A 143-amino-acid chain; its full sequence is Transcriptional regulator MraZ (143 aa).

SpoVT-AbrB domains are found at residues 5–47 and 76–119; these read EFEH…PMTE and ATEC…SAER.

The protein belongs to the MraZ family. Forms oligomers.

It is found in the cytoplasm. Its subcellular location is the nucleoid. This is Transcriptional regulator MraZ from Levilactobacillus brevis (strain ATCC 367 / BCRC 12310 / CIP 105137 / JCM 1170 / LMG 11437 / NCIMB 947 / NCTC 947) (Lactobacillus brevis).